A 251-amino-acid polypeptide reads, in one-letter code: 5-oxoprolinase subunit A (251 aa).

This sequence belongs to the LamB/PxpA family. As to quaternary structure, forms a complex composed of PxpA, PxpB and PxpC.

It catalyses the reaction 5-oxo-L-proline + ATP + 2 H2O = L-glutamate + ADP + phosphate + H(+). In terms of biological role, catalyzes the cleavage of 5-oxoproline to form L-glutamate coupled to the hydrolysis of ATP to ADP and inorganic phosphate. In Tolumonas auensis (strain DSM 9187 / NBRC 110442 / TA 4), this protein is 5-oxoprolinase subunit A.